The chain runs to 125 residues: UPF0231 protein HD_1708 (125 aa).

It belongs to the UPF0231 family.

This chain is UPF0231 protein HD_1708, found in Haemophilus ducreyi (strain 35000HP / ATCC 700724).